Consider the following 1863-residue polypeptide: C-myc promoter-binding protein (1863 aa).

Residues K42–V200 form the MABP domain. Residues V192–P364 enclose the uDENN domain. The cDENN domain occupies P385 to N521. The 119-residue stretch at L523 to S641 folds into the dDENN domain. S731 carries the post-translational modification Phosphoserine. 2 PPR repeats span residues W772–P808 and D809–P843. The interval D905–C952 is disordered. Residues S912 to T921 show a composition bias toward basic and acidic residues. Residues R917 to K933 carry the Bipartite nuclear localization signal motif. Residues D936–S949 are compositionally biased toward low complexity. Phosphoserine is present on residues S1015, S1035, S1099, S1151, and S1152. The segment at T1075–L1111 is disordered. Residues T1177–R1202 form a disordered region. A phosphoserine mark is found at S1225, S1240, and S1251. Disordered regions lie at residues N1237–F1306 and S1348–D1375. Basic and acidic residues predominate over residues T1269–L1279. S1281 carries the post-translational modification Phosphoserine. 2 stretches are compositionally biased toward polar residues: residues D1297 to F1306 and S1348 to L1371. 4 positions are modified to phosphoserine: S1508, S1587, S1589, and S1591.

In terms of tissue distribution, expressed ubiquitously. Highest expression in bone marrow, medium in peripheral blood lymphocytes and lowest in spleen. In brain, breast, and prostate, higher expression was seen in normal cells than in tumor cells. Expression is regulated in a growth- and cell cycle-dependent manner.

Its subcellular location is the nucleus. Probable guanine nucleotide exchange factor (GEF) which may activate RAB10. Promotes the exchange of GDP to GTP, converting inactive GDP-bound Rab proteins into their active GTP-bound form. According to PubMed:8056341, it may bind to ISRE-like element (interferon-stimulated response element) of MYC P2 promoter. This chain is C-myc promoter-binding protein (DENND4A), found in Homo sapiens (Human).